The sequence spans 418 residues: MLPNTGRLAGCTVFITGASRGIGKAIALKAAKDGANIVIAAKTAQPHPKLLGTIYTAAEEIEAVGGKALPCIVDVRDEQQINAAVEKAIKQFGGIDILVNNASAISLTNTLDTPTKRLDLMMNVNTRGTYLASKACIPYLKKSKVAHILNISPPLNLNPIWFKQHCAYTIAKYGMSMYVLGMAEEFKGEIAVNALWPKTAIHTAAMDMLGGPGIESQCRKVDIIADAAYSIFQKPKSFTGNFVIDESILKEEGIENFDVYAIKPGHPLQPDFFLDEYPEAVSKKMESTGAVPEFKEEKPQPQPKPRSGAVEETFRIVKDSLSDDVVKATQAVYLFELSGEDGGTWFLDLKSKGGNVGYGEPSDQADVVMSMTTDDFVKMFSGKLKPTMAFMSGKLKIKGNMALAIKLEKLMNQMNARL.

NADP(+)-binding positions include 17–23 (GASRGIG), Lys-42, and Asp-74. An N6-(2-hydroxyisobutyryl)lysine modification is found at Lys-42. Lys-116 carries the post-translational modification N6-acetyllysine. Tyr-168 functions as the Proton acceptor in the catalytic mechanism. Lys-172 provides a ligand contact to NADP(+). Residues 287 to 310 (STGAVPEFKEEKPQPQPKPRSGAV) are disordered. The SCP2 domain maps to 306–415 (RSGAVEETFR…KLEKLMNQMN (110 aa)). Position 318 is an N6-succinyllysine (Lys-318).

Belongs to the short-chain dehydrogenases/reductases (SDR) family.

Its subcellular location is the peroxisome. It localises to the mitochondrion. Its function is as follows. Has apparently no steroid dehydrogenase activity. Controls bile acid (BA) and lipid metabolism in response to nutritional cues. The protein is Hydroxysteroid dehydrogenase-like protein 2 (HSDL2) of Pongo abelii (Sumatran orangutan).